Reading from the N-terminus, the 135-residue chain is Small ribosomal subunit protein uS8 (135 aa).

The protein belongs to the universal ribosomal protein uS8 family. In terms of assembly, part of the 30S ribosomal subunit. Contacts proteins S5 and S12.

Its function is as follows. One of the primary rRNA binding proteins, it binds directly to 16S rRNA central domain where it helps coordinate assembly of the platform of the 30S subunit. The sequence is that of Small ribosomal subunit protein uS8 from Corynebacterium urealyticum (strain ATCC 43042 / DSM 7109).